The chain runs to 202 residues: Putative pre-16S rRNA nuclease (202 aa).

Disordered regions lie at residues 1-27 (MSGS…GVRI) and 170-202 (GCAA…SDER). Basic and acidic residues predominate over residues 9-20 (GDSRPGDSRPGD).

Belongs to the YqgF nuclease family.

The protein resides in the cytoplasm. Could be a nuclease involved in processing of the 5'-end of pre-16S rRNA. The polypeptide is Putative pre-16S rRNA nuclease (Frankia casuarinae (strain DSM 45818 / CECT 9043 / HFP020203 / CcI3)).